Here is a 264-residue protein sequence, read N- to C-terminus: tRNA (guanine-N(1)-)-methyltransferase (264 aa).

Residues Gly120 and 140 to 145 (IGDYVL) each bind S-adenosyl-L-methionine.

This sequence belongs to the RNA methyltransferase TrmD family. Homodimer.

It localises to the cytoplasm. The catalysed reaction is guanosine(37) in tRNA + S-adenosyl-L-methionine = N(1)-methylguanosine(37) in tRNA + S-adenosyl-L-homocysteine + H(+). In terms of biological role, specifically methylates guanosine-37 in various tRNAs. In Halorhodospira halophila (strain DSM 244 / SL1) (Ectothiorhodospira halophila (strain DSM 244 / SL1)), this protein is tRNA (guanine-N(1)-)-methyltransferase.